Here is a 296-residue protein sequence, read N- to C-terminus: MAASGGSGGKATELLRCLPRVTLANLRPNPGARHREKRRGRGIHGGRKSGRGHKGETQRGNQPRLGFEGGQTPFYLVIPKYGYNEGHSFRRQYQPLSLNRLQYLIDLGRIDPTQPIDLTQLVNARGVTIQPLKRDYGVQLVEEGADLFAAKVNIEVQWASQLAIAAIEKNGGLITTGFYDPRSLDVLCKPVPFFMRGQPIPKRMLPPEDLVKYYTDAENRGYLADPRNVLEARKQLARKYGYVLPDITKDELYQMLSTRKDPRQIFFGLAPGWIVNMPEKKILKPTDERLLSYYSS.

The N-terminal 20 residues, 1–20, are a transit peptide targeting the mitochondrion; it reads MAASGGSGGKATELLRCLPR. Positions 25-66 are disordered; the sequence is NLRPNPGARHREKRRGRGIHGGRKSGRGHKGETQRGNQPRLG. Basic residues predominate over residues 32–52; it reads ARHREKRRGRGIHGGRKSGRG.

The protein belongs to the universal ribosomal protein uL15 family. As to quaternary structure, component of the mitochondrial ribosome large subunit (39S) which comprises a 16S rRNA and about 50 distinct proteins.

The protein localises to the mitochondrion. The chain is Large ribosomal subunit protein uL15m (mrpl15) from Xenopus laevis (African clawed frog).